We begin with the raw amino-acid sequence, 943 residues long: MSSNTVAEFAAELKKSPETLLDQLKSAGVVKVSPSDVLNEADKQKLLAHLQASHGTAGGDRKKITLVKKSTSEIKQADASGKARTIQVEVRKKRTFIKRDDNVDAPSDAAESAPSAEDLELVRREEEARRQAELIRRQEEELALTRREREERERREREAEERAAAYAAQQAEKKAQESAERAEAQREAAVEAEERAKAQADARAKADEESKARAAEETARAADLDERRRKALAEAEAIRAMMAAPKKVLVAKKPEEPKPAAKAGASGDAKKGTLHKPATGSGTGARAAAPSAPGGAGKEVKSAKLSSSWANDTTKKKEIKTRGDSSGGVGRNNWRGGPRGRRGNDRDDQRQQQAATEFRVLEVYVPETITVAELAHKMAIKASEVIKSLMKMGQMVTINQPLDQDTAMIVVEEMGHTAKVAALDDPEAFTAEEVSSQDAEQLSRAPVVTVMGHVDHGKTSLLDYIRRSKVASGEAGGITQHIGAYHVETPRGIVTFLDTPGHEAFTAMRARGAQATDIVILVCAADDGVMPQTKEAIKHAKAAGVPIVVALTKADKPEANIERVKQELVGEQVVPEEYGGDSPFVAVSSKTGMGIDALLEQVLLQAEVLELKAPVDAAAKGIVIETQLDKGRGSVATVLVQSGTLKVGDVVLAGQTFGRVRAMLDEDGKQTKEAGPSIPVEIQGLNEVPQAGDDFMVLQDERRAREIATYRAGKFRNTKLAKQQAAKLENMFAEMGAGEVQTLPLIIKADVQGSQEALAASLLKLSTEEIRVQIVYSGVGGISESDVNLAIASKAIVIGFNVRADAQARKTAEGNDVDIRYYNIIYDAVDEVKAAMSGMLAPEQREEAIGTAEIRTVFVASKIGTVAGSYITSGQVTRNCKFRLLRDNIVIYTGDVESVRRMKDDVKEVKEGFECGIKLKNYNDIKEGDQLEFFEIKEIARTL.

2 disordered regions span residues 96-229 (FIKR…ERRR) and 243-352 (AAPK…QRQQ). Residues 104–116 (DAPSDAAESAPSA) are compositionally biased toward low complexity. 2 stretches are compositionally biased toward basic and acidic residues: residues 120 to 163 (ELVR…EERA) and 171 to 229 (AEKK…ERRR). Over residues 278-293 (ATGSGTGARAAAPSAP) the composition is skewed to low complexity. The span at 313-323 (TTKKKEIKTRG) shows a compositional bias: basic and acidic residues. Residues 443-612 (SRAPVVTVMG…LLQAEVLELK (170 aa)) form the tr-type G domain. Positions 452–459 (GHVDHGKT) are G1. GTP is bound at residue 452–459 (GHVDHGKT). The tract at residues 477–481 (GITQH) is G2. Residues 498–501 (DTPG) are G3. GTP contacts are provided by residues 498-502 (DTPGH) and 552-555 (TKAD). Residues 552-555 (TKAD) are G4. A G5 region spans residues 588–590 (SSK).

Belongs to the TRAFAC class translation factor GTPase superfamily. Classic translation factor GTPase family. IF-2 subfamily.

It localises to the cytoplasm. One of the essential components for the initiation of protein synthesis. Protects formylmethionyl-tRNA from spontaneous hydrolysis and promotes its binding to the 30S ribosomal subunits. Also involved in the hydrolysis of GTP during the formation of the 70S ribosomal complex. The protein is Translation initiation factor IF-2 of Acidovorax sp. (strain JS42).